We begin with the raw amino-acid sequence, 408 residues long: Putative transporter AmpG 2 (408 aa).

A run of 12 helical transmembrane segments spans residues 10-30 (YISN…IYLL), 49-69 (IGLF…GPLL), 84-104 (YCLI…TNFN), 109-129 (FIPF…YDML), 154-174 (FRIG…IISW), 177-197 (VYRS…IYPL), 224-244 (WLII…LSIM), 261-281 (LGYK…GGFL), 294-311 (ALIY…LYFY), 315-337 (ITSL…SPFF), 353-373 (IALI…ISGY), and 378-398 (LGWT…YILI).

It belongs to the major facilitator superfamily.

It is found in the cell inner membrane. The polypeptide is Putative transporter AmpG 2 (ampG2) (Rickettsia felis (strain ATCC VR-1525 / URRWXCal2) (Rickettsia azadi)).